A 172-amino-acid chain; its full sequence is NAD(P)H-quinone oxidoreductase subunit J (172 aa).

The protein belongs to the complex I 30 kDa subunit family. NDH-1 can be composed of about 15 different subunits; different subcomplexes with different compositions have been identified which probably have different functions.

It is found in the cellular thylakoid membrane. It catalyses the reaction a plastoquinone + NADH + (n+1) H(+)(in) = a plastoquinol + NAD(+) + n H(+)(out). It carries out the reaction a plastoquinone + NADPH + (n+1) H(+)(in) = a plastoquinol + NADP(+) + n H(+)(out). NDH-1 shuttles electrons from an unknown electron donor, via FMN and iron-sulfur (Fe-S) centers, to quinones in the respiratory and/or the photosynthetic chain. The immediate electron acceptor for the enzyme in this species is believed to be plastoquinone. Couples the redox reaction to proton translocation, and thus conserves the redox energy in a proton gradient. Cyanobacterial NDH-1 also plays a role in inorganic carbon-concentration. The sequence is that of NAD(P)H-quinone oxidoreductase subunit J from Synechococcus elongatus (strain ATCC 33912 / PCC 7942 / FACHB-805) (Anacystis nidulans R2).